Consider the following 656-residue polypeptide: Replication protein A 70 kDa DNA-binding subunit A (656 aa).

The segment at residues 225–307 is a DNA-binding region (OB); it reads AIKARVTAKG…NHLNNEWEIL (83 aa). The segment at 516 to 542 adopts a C4-type zinc-finger fold; it reads CPNMIGDRQCNKKVTKSTNGNWTCDKC.

Belongs to the replication factor A protein 1 family. Heterotrimer of RPA1, RPA2 and RPA3 (canonical replication protein A complex). Interacts with RPA2B. Expressed in root tips, roots, shoot apical meristem (SAM), young leaves, flag leaves and ears, and at lower levels in mature leaves.

Its subcellular location is the nucleus. In terms of biological role, component of the replication protein A complex (RPA) required for DNA recombination, repair and replication. The activity of RPA is mediated by single-stranded DNA binding and protein interactions. Plays an essential role in meiotic and somatic DNA repair, but is dispensable for DNA replication and homologous recombination. Is essential for normal progression through meiosis in pollen mother cells. Is involved in repair of double-strand DNA breaks (DSBs) induced by genotoxic stresses. The sequence is that of Replication protein A 70 kDa DNA-binding subunit A (RPA1A) from Oryza sativa subsp. japonica (Rice).